Consider the following 277-residue polypeptide: Large ribosomal subunit protein uL2 (277 aa).

Disordered regions lie at residues 36–58 and 219–277; these read PLHKKGGRNNQGKLTVRHQGGGH and TVRG…RKNK. A compositionally biased stretch (basic residues) spans 258-277; that stretch reads KTRKKKNKSDKFIVRRRKNK.

It belongs to the universal ribosomal protein uL2 family. As to quaternary structure, part of the 50S ribosomal subunit. Forms a bridge to the 30S subunit in the 70S ribosome.

Its function is as follows. One of the primary rRNA binding proteins. Required for association of the 30S and 50S subunits to form the 70S ribosome, for tRNA binding and peptide bond formation. It has been suggested to have peptidyltransferase activity; this is somewhat controversial. Makes several contacts with the 16S rRNA in the 70S ribosome. The protein is Large ribosomal subunit protein uL2 of Bacillus velezensis (strain DSM 23117 / BGSC 10A6 / LMG 26770 / FZB42) (Bacillus amyloliquefaciens subsp. plantarum).